The sequence spans 754 residues: 5-methyltetrahydropteroyltriglutamate--homocysteine methyltransferase (754 aa).

Residues 17-20 (RELK) and Lys117 contribute to the 5-methyltetrahydropteroyltri-L-glutamate site. L-homocysteine contacts are provided by residues 431–433 (IGS) and Glu484. L-methionine contacts are provided by residues 431 to 433 (IGS) and Glu484. 5-methyltetrahydropteroyltri-L-glutamate contacts are provided by residues 515–516 (RC) and Trp561. Asp599 is an L-homocysteine binding site. Asp599 contacts L-methionine. 5-methyltetrahydropteroyltri-L-glutamate is bound at residue Glu605. Zn(2+)-binding residues include His641, Cys643, and Glu665. The active-site Proton donor is His694. A Zn(2+)-binding site is contributed by Cys726.

This sequence belongs to the vitamin-B12 independent methionine synthase family. Zn(2+) is required as a cofactor.

It carries out the reaction 5-methyltetrahydropteroyltri-L-glutamate + L-homocysteine = tetrahydropteroyltri-L-glutamate + L-methionine. It participates in amino-acid biosynthesis; L-methionine biosynthesis via de novo pathway; L-methionine from L-homocysteine (MetE route): step 1/1. Functionally, catalyzes the transfer of a methyl group from 5-methyltetrahydrofolate to homocysteine resulting in methionine formation. This chain is 5-methyltetrahydropteroyltriglutamate--homocysteine methyltransferase, found in Salmonella agona (strain SL483).